Reading from the N-terminus, the 200-residue chain is 3-isopropylmalate dehydratase small subunit (200 aa).

Belongs to the LeuD family. LeuD type 1 subfamily. Heterodimer of LeuC and LeuD.

The catalysed reaction is (2R,3S)-3-isopropylmalate = (2S)-2-isopropylmalate. Its pathway is amino-acid biosynthesis; L-leucine biosynthesis; L-leucine from 3-methyl-2-oxobutanoate: step 2/4. Functionally, catalyzes the isomerization between 2-isopropylmalate and 3-isopropylmalate, via the formation of 2-isopropylmaleate. The protein is 3-isopropylmalate dehydratase small subunit of Saccharopolyspora erythraea (strain ATCC 11635 / DSM 40517 / JCM 4748 / NBRC 13426 / NCIMB 8594 / NRRL 2338).